The primary structure comprises 200 residues: ATP-dependent Clp protease proteolytic subunit 3 (200 aa).

Ser101 (nucleophile) is an active-site residue. The active site involves His126.

The protein belongs to the peptidase S14 family. In terms of assembly, fourteen ClpP subunits assemble into 2 heptameric rings which stack back to back to give a disk-like structure with a central cavity, resembling the structure of eukaryotic proteasomes.

Its subcellular location is the cytoplasm. The enzyme catalyses Hydrolysis of proteins to small peptides in the presence of ATP and magnesium. alpha-casein is the usual test substrate. In the absence of ATP, only oligopeptides shorter than five residues are hydrolyzed (such as succinyl-Leu-Tyr-|-NHMec, and Leu-Tyr-Leu-|-Tyr-Trp, in which cleavage of the -Tyr-|-Leu- and -Tyr-|-Trp bonds also occurs).. Functionally, cleaves peptides in various proteins in a process that requires ATP hydrolysis. Has a chymotrypsin-like activity. Plays a major role in the degradation of misfolded proteins. This Parasynechococcus marenigrum (strain WH8102) protein is ATP-dependent Clp protease proteolytic subunit 3.